The chain runs to 407 residues: Putative serine/threonine-protein kinase C01C4.3 (407 aa).

Polar residues predominate over residues 33–57; that stretch reads NQLQNHPPRNATQSPQRQPRTSESS. A disordered region spans residues 33-68; the sequence is NQLQNHPPRNATQSPQRQPRTSESSMDFPRSALRRN. Residues 126–397 enclose the Protein kinase domain; it reads YTVNKQLGTG…RKCLAKEKLL (272 aa). ATP contacts are provided by residues 132–140 and Lys-155; that span reads LGTGRFGFI. Asn-251 (proton acceptor) is an active-site residue.

Belongs to the protein kinase superfamily. Ser/Thr protein kinase family.

It catalyses the reaction L-seryl-[protein] + ATP = O-phospho-L-seryl-[protein] + ADP + H(+). The enzyme catalyses L-threonyl-[protein] + ATP = O-phospho-L-threonyl-[protein] + ADP + H(+). This is Putative serine/threonine-protein kinase C01C4.3 from Caenorhabditis elegans.